Here is a 453-residue protein sequence, read N- to C-terminus: Serine/threonine-protein phosphatase 2A regulatory subunit B'' subunit gamma (453 aa).

2 EF-hand domains span residues proline 273–asparagine 308 and lysine 341–leucine 376. Aspartate 286, aspartate 288, asparagine 290, methionine 292, and glutamate 297 together coordinate Ca(2+).

Interacts with MCM3AP/GANP, PPP5C, and the phosphatase 2A core enzyme composed of the PPP2CA catalytic subunit and the constant regulatory subunit PPP2R1A. Finds in a complex with ABCB1, TFPI2 and PPP2R3C; leading to the dephosphorylation of ABCB1. In terms of tissue distribution, expressed in all tissues tested including heart, brain, spleen, thymus, lung, liver, kidney and testis.

The protein resides in the nucleus. Its subcellular location is the cytoplasm. May regulate MCM3AP phosphorylation through phosphatase recruitment. May act as a negative regulator of ABCB1 expression and function through the dephosphorylation of ABCB1 by TFPI2/PPP2R3C complex. May play a role in the activation-induced cell death of B-cells. The polypeptide is Serine/threonine-protein phosphatase 2A regulatory subunit B'' subunit gamma (Ppp2r3c) (Mus musculus (Mouse)).